A 186-amino-acid chain; its full sequence is MNPALSQHYREILVGLGEDPQREGLLDTPKRAAKAMQYLCHGYGQTLEEIVNGALFASDNDEMVIVRDIELYSLCEHHLLPFIGKAHVAYIPTGKVLGLSKVARIVDMFARRLQIQENLTRQIAEAVRQVTSAAGVAVVIEAQHMCMMMRGVEKQNSQMFTSVMLGAFRDSNTTRQEFLQLIGRSK.

This sequence belongs to the GTP cyclohydrolase I family. Homomer.

It catalyses the reaction GTP + H2O = 7,8-dihydroneopterin 3'-triphosphate + formate + H(+). It participates in cofactor biosynthesis; 7,8-dihydroneopterin triphosphate biosynthesis; 7,8-dihydroneopterin triphosphate from GTP: step 1/1. The polypeptide is GTP cyclohydrolase 1 1 (folE1) (Pseudomonas aeruginosa (strain ATCC 15692 / DSM 22644 / CIP 104116 / JCM 14847 / LMG 12228 / 1C / PRS 101 / PAO1)).